The sequence spans 141 residues: Large ribosomal subunit protein uL22 (141 aa).

It belongs to the universal ribosomal protein uL22 family. Part of the 50S ribosomal subunit.

This protein binds specifically to 23S rRNA; its binding is stimulated by other ribosomal proteins, e.g. L4, L17, and L20. It is important during the early stages of 50S assembly. It makes multiple contacts with different domains of the 23S rRNA in the assembled 50S subunit and ribosome. Its function is as follows. The globular domain of the protein is located near the polypeptide exit tunnel on the outside of the subunit, while an extended beta-hairpin is found that lines the wall of the exit tunnel in the center of the 70S ribosome. The protein is Large ribosomal subunit protein uL22 of Frankia alni (strain DSM 45986 / CECT 9034 / ACN14a).